Reading from the N-terminus, the 349-residue chain is Heat-inducible transcription repressor HrcA (349 aa).

This sequence belongs to the HrcA family.

In terms of biological role, negative regulator of class I heat shock genes (grpE-dnaK-dnaJ and groELS operons). Prevents heat-shock induction of these operons. The chain is Heat-inducible transcription repressor HrcA from Xylella fastidiosa (strain M23).